We begin with the raw amino-acid sequence, 333 residues long: Prenyltransferase stbC (333 aa).

Transmembrane regions (helical) follow at residues 74–94 (VAFQAVLYIGWTFFMRGAGCA), 125–145 (ANIFGFAMVALAFACISPLPA), 147–164 (CQRLGLMTTVLSIIYPFC), 173–193 (VILGMTLAINFILAAYGAGLP), 201–221 (VPTICVTTAITLLVVFYDVVY), 247–267 (ILLTSITLVIAGLIATTGVLV), 272–292 (YFFVFSVAGLLAALLAMIGGI), and 304–324 (SGWFYALAIFNLLGGYLIEYL).

This sequence belongs to the UbiA prenyltransferase family.

It is found in the membrane. The enzyme catalyses orsellinate + (2E,6E)-farnesyl diphosphate = ilicicolinate B + diphosphate. Its pathway is secondary metabolite biosynthesis; terpenoid biosynthesis. Functionally, prenyltransferase; part of the cluster that mediates the biosynthesis of LL-Z1272-beta, also known as ilicicolin B, a prenylated aryl-aldehyde produced by several fungi and that serves as a key pathway intermediate for many fungal meroterpenoids. The first step in the pathway is performed by the non-reducing polyketide synthase stbA that produces orsellinic acid by condensing acetyl-CoA with 3 malonyl-CoA units. The prenyltransferase stbC then prenylates orsenilic acid into grifolic acid. Finally, grifolic acid is reduced to ilicicolin B by the NRPS-like protein stbB. The sequence is that of Prenyltransferase stbC from Stachybotrys bisbyi (Hyalostachybotrys bisbyi).